The chain runs to 177 residues: Large ribosomal subunit protein uL6 (177 aa).

This sequence belongs to the universal ribosomal protein uL6 family. In terms of assembly, part of the 50S ribosomal subunit.

Its function is as follows. This protein binds to the 23S rRNA, and is important in its secondary structure. It is located near the subunit interface in the base of the L7/L12 stalk, and near the tRNA binding site of the peptidyltransferase center. The protein is Large ribosomal subunit protein uL6 of Marinomonas sp. (strain MWYL1).